A 793-amino-acid chain; its full sequence is 3',5'-cyclic-nucleotide phosphodiesterase regA (793 aa).

Positions 1-153 (MNNKQEEIDQ…SSHRVSDFSD (153 aa)) are disordered. Low complexity-rich tracts occupy residues 13 to 34 (SSTS…DSTS), 54 to 69 (NKNN…SNNN), and 80 to 121 (NNSS…NNNN). The 120-residue stretch at 161-280 (RILVADDDDV…LLKKKIDTVL (120 aa)) folds into the Response regulatory domain. Asp-212 carries the 4-aspartylphosphate modification. A PDEase domain is found at 410 to 733 (RRNSIPTFPQ…ENWQAYMELQ (324 aa)). Residue His-487 is the Proton donor of the active site. A divalent metal cation contacts are provided by His-491, His-527, Asp-528, and Asp-639. Residues 756–793 (KLPKIDEEENRDKVSSSSSSSTAPLTSTSSSNNETSSS) form a disordered region. Over residues 770 to 793 (SSSSSSSTAPLTSTSSSNNETSSS) the composition is skewed to low complexity.

This sequence belongs to the cyclic nucleotide phosphodiesterase family. It depends on a divalent metal cation as a cofactor. The phosphorelay mechanism involves the sequential transfer of a phosphate group from Asp-212 of pde2 to 'His-65' of rdeA. Phosphorylation of Asp-212 activates the phosphodiesterase domain.

The protein resides in the cytoplasm. It localises to the cytosol. It catalyses the reaction 3',5'-cyclic AMP + H2O = AMP + H(+). Inhibited by 3-isobutyl-1-methylxanthine (IBMX). In terms of biological role, phosphodiesterase specific for cAMP. Involved in the degradation of intracellular cAMP. Morphological suppressor of tagB. Phosphorelay protein that accepts phosphate from rdeA or supplies phosphate from regA; depending on the relative concentration of the phosphodonor proteins. This chain is 3',5'-cyclic-nucleotide phosphodiesterase regA (regA), found in Dictyostelium discoideum (Social amoeba).